The chain runs to 1044 residues: Elongation factor 3B (1044 aa).

Ser-2 carries the post-translational modification N-acetylserine. The HEAT 1 repeat unit spans residues Gln-5 to Ile-42. Residues Ile-42, His-44, and Ser-83 each coordinate ADP. HEAT repeat units follow at residues Pro-86 to Pro-123, Val-124 to Glu-162, Leu-166 to Asn-203, Asp-205 to Pro-241, Ala-242 to Asp-279, and Pro-285 to Val-323. N6,N6,N6-trimethyllysine occurs at positions 187 and 196. 3 residues coordinate ADP: Thr-392, His-396, and Glu-397. ABC transporter domains are found at residues Asp-426 to Leu-641 and Val-667 to Glu-993. An ADP-binding site is contributed by Asn-703. Lys-789 carries the post-translational modification N6,N6,N6-trimethyllysine. 3 residues coordinate ADP: Glu-922, Asn-925, and His-951. Thr-972 is modified (phosphothreonine). Ser-974 carries the phosphoserine modification. Residues Gly-975 to Phe-1044 are disordered. The span at Arg-987–Asp-999 shows a compositional bias: basic and acidic residues. Over residues Arg-1020–Lys-1031 the composition is skewed to basic residues. Phosphoserine is present on residues Ser-1039 and Ser-1040.

This sequence belongs to the ABC transporter superfamily. ABCF family. EF3 subfamily. In terms of assembly, monomer.

It localises to the cytoplasm. The catalysed reaction is ATP + H2O = ADP + phosphate + H(+). Its pathway is protein biosynthesis; polypeptide chain elongation. Its function is as follows. Ribosome-dependent ATPase that promotes the translation of proteins required for detoxification of reactive oxygen species. Required for the ATP-dependent release of deacylated tRNA from the ribosomal E-site during protein biosynthesis. Stimulates the eEF1A-dependent binding of aminoacyl-tRNA to the ribosomal A-site, which has reduced affinity for tRNA as long as the E-site is occupied. Assists translation termination by stimulating the release of nascent protein from the ribosome by release factors. The protein is Elongation factor 3B of Saccharomyces cerevisiae (strain ATCC 204508 / S288c) (Baker's yeast).